A 199-amino-acid chain; its full sequence is Probable GTP-binding protein EngB (199 aa).

The EngB-type G domain occupies 22-195; that stretch reads QLPEIALSGR…WEWIEQQCDI (174 aa). GTP contacts are provided by residues 30–37, 57–61, 75–78, 142–145, and 174–176; these read GRSNVGKS, GKTQT, DVPG, TKMD, and FSA. Residues Ser-37 and Thr-59 each coordinate Mg(2+).

This sequence belongs to the TRAFAC class TrmE-Era-EngA-EngB-Septin-like GTPase superfamily. EngB GTPase family. Requires Mg(2+) as cofactor.

Its function is as follows. Necessary for normal cell division and for the maintenance of normal septation. The chain is Probable GTP-binding protein EngB from Latilactobacillus sakei subsp. sakei (strain 23K) (Lactobacillus sakei subsp. sakei).